Reading from the N-terminus, the 509-residue chain is ATP synthase subunit beta, mitochondrial (509 aa).

A mitochondrion-targeting transit peptide spans 1–32; the sequence is MVLPRLIPRLSRSAFKVAQANNRVFNAPFRGM. 189 to 196 provides a ligand contact to ATP; it reads GAGVGKTV.

As to quaternary structure, F-type ATP synthases have 2 components, the catalytic core F(1) and the membrane-embedded component F(0), linked together by a central stalk and a peripheral stalk. The central stalk, also called rotor shaft, is often seen as part of F(1). The peripheral stalk is seen as part of F(0). F(0) contains the membrane channel next to the rotor. F-type ATP synthases form dimers but each monomer functions independently in ATP generation. The dimer consists of 17 different polypeptides: ATP1 (subunit alpha, 3 molecules per monomer, part of F(1)), ATP2 (subunit beta, 3 copies per monomer, part of F(1)), ATP3 (subunit gamma, part of the central stalk), ATP4 (subunit b, part of the peripheral stalk), ATP5/OSCP (subunit 5/OSCP, part of the peripheral stalk), ATP6 (subunit a, part of the peripheral stalk), ATP7 (subunit d, part of the peripheral stalk), ATP8 (subunit 8, part of the peripheral stalk), OLI1 (subunit c, part of the rotor, 10 molecules per monomer), ATP14 (subunit h, part of the peripheral stalk), ATP15 (subunit epsilon, part of the central stalk), ATP16 (subunit delta, part of the central stalk), ATP17 (subunit f, part of the peripheral stalk), ATP18 (subunit i/j, part of the peripheral stalk), ATP19 (subunit k, dimer-specific, at interface between monomers), ATP20 (subunit g, at interface between monomers), TIM11 (subunit e, at interface between monomers).

The protein resides in the mitochondrion inner membrane. The catalysed reaction is ATP + H2O + 4 H(+)(in) = ADP + phosphate + 5 H(+)(out). In terms of biological role, mitochondrial membrane ATP synthase (F(1)F(0) ATP synthase or Complex V) produces ATP from ADP in the presence of a proton gradient across the membrane which is generated by electron transport complexes of the respiratory chain. F-type ATP synthases consist of two structural domains, F(1) - containing the extramembraneous catalytic core, and F(0) - containing the membrane proton channel, linked together by a central stalk and a peripheral stalk. During catalysis, ATP synthesis in the catalytic domain of F(1) is coupled via a rotary mechanism of the central stalk subunits to proton translocation. Subunits alpha/ATP1 and beta/ATP2 form the catalytic core in F(1). Rotation of the central stalk against the surrounding alpha/ATP1(3)beta/ATP2(3) subunits leads to hydrolysis of ATP in three separate catalytic sites on the beta/ATP2 subunits. The sequence is that of ATP synthase subunit beta, mitochondrial from Yarrowia lipolytica (strain CLIB 122 / E 150) (Yeast).